A 113-amino-acid chain; its full sequence is Dolichyl-diphosphooligosaccharide--protein glycosyltransferase subunit DAD1 (113 aa).

Residues 1 to 30 (MGSSAFEVLTFFLKDYKANTPQKLKIIDAY) are Cytoplasmic-facing. Residues 31 to 51 (LLYILLTGINQFLYCCLVGTF) form a helical membrane-spanning segment. A topological domain (lumenal) is located at residue Pro-52. Residues 53–73 (FNSFLSGFISCVASFVLGVCL) traverse the membrane as a helical segment. Over 74–92 (RLQVNPQNSSNFCGIPPER) the chain is Cytoplasmic. A helical transmembrane segment spans residues 93–113 (AFADFIFAHVVLHLVVMNFIG).

Belongs to the DAD/OST2 family. As to quaternary structure, component of the oligosaccharyltransferase (OST) complex. In terms of tissue distribution, widely expressed. Greatest expression seen in the epidermis, intermediate expression in the fat body and midgut and mild expression observed in the silk gland.

The protein localises to the endoplasmic reticulum membrane. Its pathway is protein modification; protein glycosylation. In terms of biological role, subunit of the oligosaccharyl transferase (OST) complex that catalyzes the initial transfer of a defined glycan (Glc(3)Man(9)GlcNAc(2) in eukaryotes) from the lipid carrier dolichol-pyrophosphate to an asparagine residue within an Asn-X-Ser/Thr consensus motif in nascent polypeptide chains, the first step in protein N-glycosylation. N-glycosylation occurs cotranslationally and the complex associates with the Sec61 complex at the channel-forming translocon complex that mediates protein translocation across the endoplasmic reticulum (ER). All subunits are required for a maximal enzyme activity. This is Dolichyl-diphosphooligosaccharide--protein glycosyltransferase subunit DAD1 from Araneus ventricosus (Orbweaver spider).